A 391-amino-acid chain; its full sequence is D-alanine--D-alanine ligase (391 aa).

The tract at residues 1 to 24 (MSSENLPQSPERAESPQAPRRKPR) is disordered. In terms of domain architecture, ATP-grasp spans 171–381 (KRVFLSFGLP…YPELVDRLIQ (211 aa)). Position 207–262 (207–262 (AGEHGWPLFIKPARGGSSMGITKVDSVEGLDAAIEEARRHDPKFLVESLLRGREIE)) interacts with ATP. Mg(2+) contacts are provided by aspartate 335, glutamate 348, and asparagine 350.

This sequence belongs to the D-alanine--D-alanine ligase family. Mg(2+) serves as cofactor. It depends on Mn(2+) as a cofactor.

It localises to the cytoplasm. It carries out the reaction 2 D-alanine + ATP = D-alanyl-D-alanine + ADP + phosphate + H(+). It functions in the pathway cell wall biogenesis; peptidoglycan biosynthesis. Functionally, cell wall formation. In Streptomyces griseus subsp. griseus (strain JCM 4626 / CBS 651.72 / NBRC 13350 / KCC S-0626 / ISP 5235), this protein is D-alanine--D-alanine ligase.